Consider the following 681-residue polypeptide: UvrABC system protein C (681 aa).

One can recognise a GIY-YIG domain in the interval 16 to 95 (DSPGVYKFRD…IKEYDPRFNV (80 aa)). Positions 208-243 (GTYIRRLERQMTDAAEEMEYEKAARLRDDIGALKKA) constitute a UVR domain. The segment at 650 to 681 (EIMEDEEPGTTAGSSQEPVSAGTSDERRGQET) is disordered. A compositionally biased stretch (polar residues) spans 660–672 (TAGSSQEPVSAGT).

Belongs to the UvrC family. Interacts with UvrB in an incision complex.

Its subcellular location is the cytoplasm. The UvrABC repair system catalyzes the recognition and processing of DNA lesions. UvrC both incises the 5' and 3' sides of the lesion. The N-terminal half is responsible for the 3' incision and the C-terminal half is responsible for the 5' incision. The polypeptide is UvrABC system protein C (Streptomyces avermitilis (strain ATCC 31267 / DSM 46492 / JCM 5070 / NBRC 14893 / NCIMB 12804 / NRRL 8165 / MA-4680)).